We begin with the raw amino-acid sequence, 85 residues long: UPF0386 protein Atu1321 (85 aa).

This sequence belongs to the UPF0386 family.

The chain is UPF0386 protein Atu1321 from Agrobacterium fabrum (strain C58 / ATCC 33970) (Agrobacterium tumefaciens (strain C58)).